Consider the following 476-residue polypeptide: MSFTVAIVGRPNVGKSTLFNRLVGKKLALVDDTPGVTRDRRPGDAKLIDLRFTIIDTAGLEQSGPETLQGRMWAQTEAAIDEADVTLFVIDAKAGLTPADETLGEMLRRRGKPVVLVANKSEARGSDAGFYDAFTLGLGEPCPVSAEHGQGMIDLRDAIVEAIGEDMAFPPDVDEAETDIVLPRTEPGSEEEEDEEPVYDETKPLRVAIIGRPNAGKSTLINRFLGEDRLLTGPEAGITRDSISVEWDWRGRTIKMFDTAGMRRKAKVTEKLEKLSVADSLRSIRFAETVVIVFDSTIPFEKQDLQLVDLVIREGRAAVLAFNKWDLVEDPQAYLADLREKTERLLPQARGIRAVPMSGQTGYGLDRLMQSIIDTDKTWNRRISTAKLNRWLDAQTTQHPPPAVSGRRLKLKYMTQVKARPPAFMISCTRPEAIPESYTRYLVNGLRKDFDMPGVPIRVHYRGSDNPFESKAKKRR.

2 consecutive EngA-type G domains span residues 3–167 (FTVA…GEDM) and 205–380 (LRVA…KTWN). Residues 9–16 (GRPNVGKS), 56–60 (DTAGL), 119–122 (NKSE), 211–218 (GRPNAGKS), 258–262 (DTAGM), and 323–326 (NKWD) contribute to the GTP site. The region spanning 381–465 (RRISTAKLNR…PIRVHYRGSD (85 aa)) is the KH-like domain.

This sequence belongs to the TRAFAC class TrmE-Era-EngA-EngB-Septin-like GTPase superfamily. EngA (Der) GTPase family. Associates with the 50S ribosomal subunit.

Functionally, GTPase that plays an essential role in the late steps of ribosome biogenesis. In Agrobacterium fabrum (strain C58 / ATCC 33970) (Agrobacterium tumefaciens (strain C58)), this protein is GTPase Der.